Consider the following 342-residue polypeptide: Holliday junction branch migration complex subunit RuvB (342 aa).

A large ATPase domain (RuvB-L) region spans residues 1–182 (MRIEALNTAP…FGINSRLDYY (182 aa)). ATP is bound by residues Ile-21, Arg-22, Gly-63, Lys-66, Thr-67, Thr-68, 129-131 (EDY), Arg-172, Tyr-182, and Arg-219. Thr-67 provides a ligand contact to Mg(2+). The segment at 183 to 253 (SPELLQSIIV…VARRTLESLE (71 aa)) is small ATPAse domain (RuvB-S). The tract at residues 256–342 (EGGLDDMDKK…DHGPLFDHNS (87 aa)) is head domain (RuvB-H). Arg-311 and Arg-316 together coordinate DNA.

This sequence belongs to the RuvB family. Homohexamer. Forms an RuvA(8)-RuvB(12)-Holliday junction (HJ) complex. HJ DNA is sandwiched between 2 RuvA tetramers; dsDNA enters through RuvA and exits via RuvB. An RuvB hexamer assembles on each DNA strand where it exits the tetramer. Each RuvB hexamer is contacted by two RuvA subunits (via domain III) on 2 adjacent RuvB subunits; this complex drives branch migration. In the full resolvosome a probable DNA-RuvA(4)-RuvB(12)-RuvC(2) complex forms which resolves the HJ.

Its subcellular location is the cytoplasm. It carries out the reaction ATP + H2O = ADP + phosphate + H(+). Functionally, the RuvA-RuvB-RuvC complex processes Holliday junction (HJ) DNA during genetic recombination and DNA repair, while the RuvA-RuvB complex plays an important role in the rescue of blocked DNA replication forks via replication fork reversal (RFR). RuvA specifically binds to HJ cruciform DNA, conferring on it an open structure. The RuvB hexamer acts as an ATP-dependent pump, pulling dsDNA into and through the RuvAB complex. RuvB forms 2 homohexamers on either side of HJ DNA bound by 1 or 2 RuvA tetramers; 4 subunits per hexamer contact DNA at a time. Coordinated motions by a converter formed by DNA-disengaged RuvB subunits stimulates ATP hydrolysis and nucleotide exchange. Immobilization of the converter enables RuvB to convert the ATP-contained energy into a lever motion, pulling 2 nucleotides of DNA out of the RuvA tetramer per ATP hydrolyzed, thus driving DNA branch migration. The RuvB motors rotate together with the DNA substrate, which together with the progressing nucleotide cycle form the mechanistic basis for DNA recombination by continuous HJ branch migration. Branch migration allows RuvC to scan DNA until it finds its consensus sequence, where it cleaves and resolves cruciform DNA. The sequence is that of Holliday junction branch migration complex subunit RuvB from Chlorobaculum parvum (strain DSM 263 / NCIMB 8327) (Chlorobium vibrioforme subsp. thiosulfatophilum).